Here is a 305-residue protein sequence, read N- to C-terminus: Acetyl-coenzyme A carboxylase carboxyl transferase subunit beta (305 aa).

The CoA carboxyltransferase N-terminal domain occupies 29–298 (LWTKCESCDA…EMKLPLLESS (270 aa)). Zn(2+) contacts are provided by Cys-33, Cys-36, Cys-52, and Cys-55. Residues 33–55 (CESCDALTYTKDLQANLMVCLQC) form a C4-type zinc finger.

Belongs to the AccD/PCCB family. As to quaternary structure, acetyl-CoA carboxylase is a heterohexamer composed of biotin carboxyl carrier protein (AccB), biotin carboxylase (AccC) and two subunits each of ACCase subunit alpha (AccA) and ACCase subunit beta (AccD). It depends on Zn(2+) as a cofactor.

Its subcellular location is the cytoplasm. It catalyses the reaction N(6)-carboxybiotinyl-L-lysyl-[protein] + acetyl-CoA = N(6)-biotinyl-L-lysyl-[protein] + malonyl-CoA. The protein operates within lipid metabolism; malonyl-CoA biosynthesis; malonyl-CoA from acetyl-CoA: step 1/1. Functionally, component of the acetyl coenzyme A carboxylase (ACC) complex. Biotin carboxylase (BC) catalyzes the carboxylation of biotin on its carrier protein (BCCP) and then the CO(2) group is transferred by the transcarboxylase to acetyl-CoA to form malonyl-CoA. In Synechococcus sp. (strain ATCC 27144 / PCC 6301 / SAUG 1402/1) (Anacystis nidulans), this protein is Acetyl-coenzyme A carboxylase carboxyl transferase subunit beta.